A 427-amino-acid chain; its full sequence is MATYNTLQDRIRVAKELLERVDKICSRQGREVEGRAKLCGKLRAELKFLQKVEAGKVVIKESHLQSTNLTHLKAIVESAESLEKVVSVLHVFAYESPDGQKQTLVVDVVANGGHTWVKSIGRKAEALHNIWQGRGQYGDKSVIRQAEDFLEASQQQPVQYSNPHIIFAFYNGVSSPMADKLKEMGISVRGDIVAVNTIEGGEEEDEEDQEGDHEDLVEEEEDGEDDNDDDSDDTDLMHTRVDRDTIVASLAFPTEVKVDVCNRVNLDITTLITYVSSLSHGNCHFTFKEVVLTEQAAQERQEKVLPRLEEFMKGKELFACQSAVEDFRVILDTLGGPGEKSRAEELLARLKVVPDQPSERTQRLVMSSKVNRRSLMIFGTGDTLRAITMTANSGFVRAAANQGVRFSVFIHQPRALTEGKEWRATPI.

Residues 200 to 234 are compositionally biased toward acidic residues; it reads GGEEEDEEDQEGDHEDLVEEEEDGEDDNDDDSDDT. Positions 200 to 236 are disordered; the sequence is GGEEEDEEDQEGDHEDLVEEEEDGEDDNDDDSDDTDL.

It belongs to the UPF0415 family.

This is UPF0415 protein C7orf25 homolog from Danio rerio (Zebrafish).